The chain runs to 349 residues: Phenylalanine--tRNA ligase alpha subunit (349 aa).

Glu258 lines the Mg(2+) pocket.

The protein belongs to the class-II aminoacyl-tRNA synthetase family. Phe-tRNA synthetase alpha subunit type 1 subfamily. Tetramer of two alpha and two beta subunits. It depends on Mg(2+) as a cofactor.

The protein resides in the cytoplasm. The catalysed reaction is tRNA(Phe) + L-phenylalanine + ATP = L-phenylalanyl-tRNA(Phe) + AMP + diphosphate + H(+). The polypeptide is Phenylalanine--tRNA ligase alpha subunit (Rickettsia akari (strain Hartford)).